The sequence spans 288 residues: Galactose/N-acetyl-D-galactosamine lectin light subunit 1 (288 aa).

Residues 1-15 (MIILVLLISYSFGKT) form the signal peptide. N-linked (GlcNAc...) asparagine glycans are attached at residues Asn-205 and Asn-261.

As to quaternary structure, heterodimer composed of a 170 kDa heavy subunit (hgl) and a 31/35 kDa light subunit (lgl); disulfide-linked.

Its subcellular location is the cell membrane. In terms of biological role, light subunit of a heterodimeric lectin; the heavy subunit binds galactose and N-acetyl-D-galactosamine of host glycoproteins and thus mediates adhesion to host cells. This chain is Galactose/N-acetyl-D-galactosamine lectin light subunit 1, found in Entamoeba histolytica (strain ATCC 30459 / HM-1:IMSS / ABRM).